A 111-amino-acid polypeptide reads, in one-letter code: Ig kappa chain V-III region PC 2880/PC 1229 (111 aa).

The tract at residues 1–23 (DIVLTQSPASLAVSLGQRATISC) is framework-1. Residues Cys-23 and Cys-92 are joined by a disulfide bond. A complementarity-determining-1 region spans residues 24–38 (RASESVDNYGISFMN). The framework-2 stretch occupies residues 39-53 (WFQQKPGQPPKLLIY). The interval 54–60 (AASNQGS) is complementarity-determining-2. Residues 61–92 (GVPARFSGSGSGTDFSLNIHPMEEDDTAMYFC) form a framework-3 region. The tract at residues 93-101 (QQSKEVPWT) is complementarity-determining-3. The segment at 102-111 (FGGGTKLEIK) is framework-4.

This Mus musculus (Mouse) protein is Ig kappa chain V-III region PC 2880/PC 1229.